The primary structure comprises 468 residues: Putative ankyrin repeat protein R873 (468 aa).

ANK repeat units lie at residues 38–68 (IKTD…KHNL), 78–107 (SLNE…DIEG), 109–137 (DNCA…NFRA), 138–167 (NNDK…DIRS), 169–197 (NDCS…NIRT), 198–227 (NDDW…DIRS), 229–257 (DDHA…NIIA), 258–287 (EDNY…NITS), 289–316 (YYTI…NIRD), 317–346 (CDSS…DFRE), 348–376 (DDLT…DFRV), 378–406 (DDYP…DVRA), 407–436 (EDDY…NIRA), and 438–466 (NDYA…VLNK).

The sequence is that of Putative ankyrin repeat protein R873 from Acanthamoeba polyphaga mimivirus (APMV).